The following is a 488-amino-acid chain: MPKVKALQCALALEIRSVTCPGVVLKDKEDIYLSICVFGQYKKTQCVPATFPLVFNARMVFEKVFPEAVDPGDVVAQLEYDTAVFELIQLVPPVGETLSTYDENTRDFMFPGPNQMSGHHDSNRQVTMRRISGLRGIAPKLEFSTTSVITECLISSRKCRTQDKFTYHSAPVEKSHGRLQCRTSRSQKKKSKSPERSKYCINTKNYEQPTISSKSHSPSPYTKRRMCELSEDTRRRLAHLNLGPYEFKKETDKPPFVIRHVDPPSPRTDNFFGSPGRDCERDGWVRMHSDHPHIGCCRSKDYKVIRSPHGRDFEDPFERCEEYLSPRTCSKPQHSARTLLVHSAPSTTPKHCASPVLNRASLRERFHSDWCSPPNCDEIHDRVKDVLKSHQAHARHLCDERDPEREDELELKRSLLYRDSAYDSDPEYSSFQRPRGSFHLDDGECWSNRAASCKGKSHRPVFENSMDKMYRNLYKKACSSVSHTQESF.

Residues 1-17 form the signal peptide; sequence MPKVKALQCALALEIRS. The interval 176 to 225 is disordered; the sequence is HGRLQCRTSRSQKKKSKSPERSKYCINTKNYEQPTISSKSHSPSPYTKRR. Positions 200–220 are enriched in polar residues; sequence CINTKNYEQPTISSKSHSPSP. A phosphoserine mark is found at Ser-217 and Ser-219. Lys-248 participates in a covalent cross-link: Glycyl lysine isopeptide (Lys-Gly) (interchain with G-Cter in SUMO2). Phosphoserine is present on residues Ser-265, Ser-274, Ser-325, Ser-343, Ser-346, Ser-354, Ser-424, Ser-465, and Ser-487.

Belongs to the SPATA6 family. Interacts with MYL6. As to expression, specifically expressed in developing spermatids and mature spermatozoa (at protein level). Isoform 1 is weakly expressed in testis, ovary, thymus and placenta. Isoform 2 and isoform 3 are testis-specific. Expression isw higher in spermatids than in spermatocytes and spermatogonia.

Its subcellular location is the secreted. The protein resides in the cell projection. It localises to the cilium. The protein localises to the flagellum. In terms of biological role, required for formation of the sperm connecting piece during spermiogenesis. Sperm connecting piece is essential for linking the developing flagellum to the head during late spermiogenesis. May be involved in myosin-based microfilament transport through interaction with myosin subunits. The protein is Spermatogenesis-associated protein 6 of Mus musculus (Mouse).